The primary structure comprises 759 residues: Subtilisin-like serine-protease S (759 aa).

The signal sequence occupies residues 1–22 (MGSAKILSFTLLLFVGYTLVHG). The Inhibitor I9 domain maps to 28–105 (YIVYMGDRSH…SVFESKMNKL (78 aa)). The region spanning 110-613 (SWDFLGLDTV…SGHVNPVASL (504 aa)) is the Peptidase S8 domain. D139 (charge relay system) is an active-site residue. N170 is a glycosylation site (N-linked (GlcNAc...) asparagine). Residue H215 is the Charge relay system of the active site. Residues N230 and N388 are each glycosylated (N-linked (GlcNAc...) asparagine). One can recognise a PA domain in the interval 390-462 (SFCKEHTLDP…MIGQDAVEEL (73 aa)). S545 serves as the catalytic Charge relay system. N593, N642, and N671 each carry an N-linked (GlcNAc...) asparagine glycan.

Belongs to the peptidase S8 family.

It is found in the secreted. The protein localises to the extracellular space. Its subcellular location is the apoplast. Functionally, required for arbuscular mycorrhiza (AM) development during AM symbiosis with AM fungi (e.g. Glomeromycota intraradices). The chain is Subtilisin-like serine-protease S from Lotus japonicus (Lotus corniculatus var. japonicus).